We begin with the raw amino-acid sequence, 107 residues long: UPF0145 protein BH1111 (107 aa).

Belongs to the UPF0145 family.

This is UPF0145 protein BH1111 from Halalkalibacterium halodurans (strain ATCC BAA-125 / DSM 18197 / FERM 7344 / JCM 9153 / C-125) (Bacillus halodurans).